The chain runs to 639 residues: NADP-dependent malic enzyme, chloroplastic (639 aa).

The N-terminal 49 residues, 1 to 49, are a transit peptide targeting the chloroplast; sequence MLSARAAATAAAAAASPLWKRGEGGSSGSGSGCTSCREVRRRAAAVRVR. The interval 15–34 is disordered; the sequence is ASPLWKRGEGGSSGSGSGCT. Catalysis depends on Tyr187, which acts as the Proton donor. Arg240 is an NAD(+) binding site. Lys258 serves as the catalytic Proton acceptor. Glu330, Asp331, and Asp354 together coordinate a divalent metal cation. Asp354 contacts NAD(+). Position 383-399 (383-399) interacts with NADP(+); the sequence is LFLGAGEAGTGIAELIA. Asn495 provides a ligand contact to NAD(+).

This sequence belongs to the malic enzymes family. As to quaternary structure, homotetramer. Requires Mg(2+) as cofactor. Mn(2+) serves as cofactor.

The protein resides in the plastid. It is found in the chloroplast. It catalyses the reaction (S)-malate + NADP(+) = pyruvate + CO2 + NADPH. The catalysed reaction is oxaloacetate + H(+) = pyruvate + CO2. The protein operates within photosynthesis; C4 acid pathway. Its function is as follows. The chloroplastic ME isoform decarboxylates malate shuttled from neighboring mesophyll cells. The CO(2) released is then refixed by ribulose-bisphosphate carboxylase. This pathway eliminates the photorespiratory loss of CO(2) that occurs in most plants. This chain is NADP-dependent malic enzyme, chloroplastic (ME6), found in Oryza sativa subsp. japonica (Rice).